A 310-amino-acid polypeptide reads, in one-letter code: Junctional adhesion molecule C (310 aa).

The signal sequence occupies residues 1–31 (MALSRRLRLRLCARLPDFFLLLLFRGCVIEA). Over 32-241 (VNLKSSNRNP…GQDMEVYDLN (210 aa)) the chain is Extracellular. Residues 35 to 127 (KSSNRNPVVH…VALNDRKEVD (93 aa)) enclose the Ig-like V-type domain. Cystine bridges form between Cys-53-Cys-115 and Cys-160-Cys-219. Residues Asn-104 and Asn-192 are each glycosylated (N-linked (GlcNAc...) asparagine). Residues 139-236 (PVAPVCRVPK…AARCEGQDME (98 aa)) form the Ig-like C2-type domain. Residues 242–262 (IAGIIGGVLVVLIVLAVITMG) traverse the membrane as a helical segment. Over 263 to 310 (ICCAYRRGCFISSKQDGESYKSPGKHEGVNYIRTSEEGDFRHKSSFVI) the chain is Cytoplasmic. Residues Cys-264 and Cys-265 are each lipidated (S-palmitoyl cysteine).

This sequence belongs to the immunoglobulin superfamily. As to quaternary structure, interacts with ITGAM. Interacts with GORASP2. Post-translationally, proteolytically cleaved from endothelial cells surface into a soluble form by ADAM10 and ADAM17; the release of soluble JAM3 is increased by pro-inflammatory factors. In terms of processing, S-palmitoylated by ZDHHC7. S-palmitoylation promotes expression at tight junctions.

Its subcellular location is the cell membrane. It localises to the cell junction. It is found in the desmosome. The protein resides in the tight junction. The protein localises to the secreted. Functionally, junctional adhesion protein that mediates heterotypic cell-cell interactions with its cognate receptor JAM2 to regulate different cellular processes. Plays a role in homing and mobilization of hematopoietic stem and progenitor cells within the bone marrow. At the surface of bone marrow stromal cells, it contributes to the retention of the hematopoietic stem and progenitor cells expressing JAM3. Plays a central role in leukocytes extravasation by facilitating transmigration through the endothelium. Plays a role in spermatogenesis where JAM2 and JAM3, which are respectively expressed by Sertoli and germ cells, mediate an interaction between both cell types and play an essential role in the anchorage of germ cells onto Sertoli cells and the assembly of cell polarity complexes during spermatid differentiation. Also functions as a counter-receptor for ITGAM, mediating leukocyte-platelet interactions and is involved in the regulation of transepithelial migration of polymorphonuclear neutrophils (PMN). Plays a role in angiogenesis. Plays a role in the regulation of cell migration. During myogenesis, it is involved in myocyte fusion. Its function is as follows. Promotes chemotaxis of vascular endothelial cells and stimulates angiogenesis. The sequence is that of Junctional adhesion molecule C (Jam3) from Rattus norvegicus (Rat).